The chain runs to 219 residues: Probable GTP-binding protein EngB (219 aa).

One can recognise an EngB-type G domain in the interval 26–200 (EGVEIAFAGR…RAKLDTWFAP (175 aa)). GTP contacts are provided by residues 34–41 (GRSNAGKS), 61–65 (GRTQL), 79–82 (DLPG), 146–149 (TKAD), and 179–181 (FSS). Mg(2+) is bound by residues Ser41 and Thr63.

Belongs to the TRAFAC class TrmE-Era-EngA-EngB-Septin-like GTPase superfamily. EngB GTPase family. Requires Mg(2+) as cofactor.

Necessary for normal cell division and for the maintenance of normal septation. This is Probable GTP-binding protein EngB from Vibrio parahaemolyticus serotype O3:K6 (strain RIMD 2210633).